The sequence spans 458 residues: UDP-N-acetylmuramate--L-alanine ligase (458 aa).

119-125 (GTHGKTT) is a binding site for ATP.

Belongs to the MurCDEF family.

It is found in the cytoplasm. The enzyme catalyses UDP-N-acetyl-alpha-D-muramate + L-alanine + ATP = UDP-N-acetyl-alpha-D-muramoyl-L-alanine + ADP + phosphate + H(+). It functions in the pathway cell wall biogenesis; peptidoglycan biosynthesis. Its function is as follows. Cell wall formation. This chain is UDP-N-acetylmuramate--L-alanine ligase, found in Phocaeicola vulgatus (strain ATCC 8482 / DSM 1447 / JCM 5826 / CCUG 4940 / NBRC 14291 / NCTC 11154) (Bacteroides vulgatus).